We begin with the raw amino-acid sequence, 214 residues long: Large ribosomal subunit protein uL3 (214 aa).

The tract at residues 129-155 is disordered; the sequence is FGRGPMSHGSKNHRRPGSVGAGTTPGR.

The protein belongs to the universal ribosomal protein uL3 family. Part of the 50S ribosomal subunit. Forms a cluster with proteins L14 and L19.

Functionally, one of the primary rRNA binding proteins, it binds directly near the 3'-end of the 23S rRNA, where it nucleates assembly of the 50S subunit. This chain is Large ribosomal subunit protein uL3, found in Synechococcus sp. (strain JA-3-3Ab) (Cyanobacteria bacterium Yellowstone A-Prime).